We begin with the raw amino-acid sequence, 1835 residues long: AT-rich interactive domain-containing protein 2 (1835 aa).

N-acetylalanine is present on Ala-2. At Ser-4 the chain carries Phosphoserine. Residues Lys-7, Lys-15, and Lys-119 each participate in a glycyl lysine isopeptide (Lys-Gly) (interchain with G-Cter in SUMO2) cross-link. In terms of domain architecture, ARID spans 13–105; sequence RRKGLAFLDE…YLEKYEKVHH (93 aa). The LXXLL motif lies at 313 to 317; that stretch reads LRFLL. Residues 524–603 constitute a DNA-binding region (RFX-type winged-helix); that stretch reads ACQWLNAHFE…IHVVGVKRRA (80 aa). A Glycyl lysine isopeptide (Lys-Gly) (interchain with G-Cter in SUMO2) cross-link involves residue Lys-555. Ser-631 and Ser-635 each carry phosphoserine. The residue at position 653 (Thr-653) is a Phosphothreonine. Position 689 is a phosphoserine (Ser-689). Position 692 is a phosphothreonine (Thr-692). Disordered regions lie at residues 819–844, 962–1057, 1266–1287, 1295–1314, and 1321–1341; these read QQLI…QSQD, LTGQ…SGES, MENP…KENE, NGRK…KIQS, and LISN…KQNS. Composition is skewed to low complexity over residues 823 to 843, 985 to 996, and 1025 to 1044; these read TTSP…SQSQ, PTAMSSSSTPQS, and QVQV…QPQQ. Phosphoserine is present on Ser-1300. Residues 1301–1314 are compositionally biased toward polar residues; it reads DSSLPPSNSGKIQS. Phosphoserine is present on residues Ser-1391 and Ser-1496. Disordered stretches follow at residues 1488-1522 and 1572-1629; these read DSGS…AEDT and SAVQ…RKPG. Over residues 1491–1509 the composition is skewed to polar residues; sequence SKVSHSPALSSDVRSTNGT. Positions 1513–1522 are enriched in basic and acidic residues; that stretch reads KTVKRPAEDT. Over residues 1573–1592 the composition is skewed to polar residues; the sequence is AVQQKQQHPPTYVQNVVPQN. A compositionally biased stretch (low complexity) spans 1602 to 1623; it reads QVQGQPNSSQPSPFSGSSQPGD. A C2H2-type zinc finger spans residues 1632 to 1657; the sequence is FMCLWQSCKKWFQTPSQVFYHAATEH. Residues Lys-1701, Lys-1716, and Lys-1731 each participate in a glycyl lysine isopeptide (Lys-Gly) (interchain with G-Cter in SUMO2) cross-link. The tract at residues 1703–1728 is disordered; sequence DEPGQAGSQKSSTKQPTVGGTSSTPR. Polar residues predominate over residues 1708-1728; that stretch reads AGSQKSSTKQPTVGGTSSTPR.

In terms of assembly, component of the SWI/SNF-B (PBAF) chromatin remodeling complex, at least composed of SMARCA4/BRG1, SMARCB1/BAF47/SNF5, ACTL6A/BAF53A or ACTL6B/BAF53B, SMARCE1/BAF57, SMARCD1/BAF60A, SMARCD2/BAF60B, perhaps SMARCD3/BAF60C, SMARCC1/BAF155, SMARCC2/BAF170, PBRM1/BAF180, ARID2/BAF200 and actin. Interacts with SRF. Forms complexes with SRF and SRF cofactors MYOCD, NKX2-5 and SRFBP1. Highly expressed in heart.

The protein resides in the nucleus. Its function is as follows. Involved in transcriptional activation and repression of select genes by chromatin remodeling (alteration of DNA-nucleosome topology). Required for the stability of the SWI/SNF chromatin remodeling complex SWI/SNF-B (PBAF). May be involved in targeting the complex to different genes. May be involved in regulating transcriptional activation of cardiac genes. This is AT-rich interactive domain-containing protein 2 from Homo sapiens (Human).